We begin with the raw amino-acid sequence, 573 residues long: DNA ligase (573 aa).

E250 lines the ATP pocket. K252 acts as the N6-AMP-lysine intermediate in catalysis. Residues R257, R272, E301, F342, R432, and K438 each contribute to the ATP site.

The protein belongs to the ATP-dependent DNA ligase family. Requires Mg(2+) as cofactor.

It carries out the reaction ATP + (deoxyribonucleotide)n-3'-hydroxyl + 5'-phospho-(deoxyribonucleotide)m = (deoxyribonucleotide)n+m + AMP + diphosphate.. Functionally, DNA ligase that seals nicks in double-stranded DNA during DNA replication, DNA recombination and DNA repair. The sequence is that of DNA ligase from Methanococcus maripaludis (strain C7 / ATCC BAA-1331).